The following is a 485-amino-acid chain: Probable alginate O-acetylase AlgI (485 aa).

The next 9 helical transmembrane spans lie at 7 to 24 (VFLF…YLSG), 39 to 61 (FYAW…NYWI), 78 to 100 (WLLL…NFGV), 115 to 137 (FILT…ISYI), 150 to 172 (NLID…VLRF), 312 to 334 (FLTM…WGAW), 360 to 382 (AFTF…HVAA), 402 to 424 (AQLT…FFGL), and 461 to 483 (ILLL…FLYF). The active site involves His-322.

It belongs to the membrane-bound acyltransferase family.

The protein localises to the cell inner membrane. Its pathway is glycan biosynthesis; alginate biosynthesis. Functionally, together with AlgJ and AlgF, forms an inner membrane complex which probably interacts with the alginate polymerization-transport complex and adds acetyl groups at the O-2 and O-3 positions of mannuronate residues. Acetylation of alginate is important for the architecture of biofilms and increases the ability of alginate to act as a defense barrier. The polypeptide is Probable alginate O-acetylase AlgI (algI) (Pseudomonas putida (strain ATCC 47054 / DSM 6125 / CFBP 8728 / NCIMB 11950 / KT2440)).